The chain runs to 342 residues: Cytochrome c oxidase subunit 2 (342 aa).

The signal sequence occupies residues 1 to 22 (MKLWKTASRFLPLSFLTLFLTG). A lipid anchor (N-palmitoyl cysteine) is attached at C23. A lipid anchor (S-diacylglycerol cysteine) is attached at C23. Residues 23 to 50 (CLGEENLTALDPKGPQAQWIYDNMILSI) are Extracellular-facing. The cytochrome c oxidase subunit II stretch occupies residues 23–249 (CLGEENLTAL…MSAEVEEPTE (227 aa)). Residues 51 to 69 (IVMALVSIVVFAIFFIILA) form a helical membrane-spanning segment. The Cytoplasmic portion of the chain corresponds to 70-89 (KYRRKPGDDEIPKQVHGNTA). A helical membrane pass occupies residues 90–108 (LEITWTVIPIILLVILAVP). Residues 109 to 342 (TITGTFMFAD…AYLRSLKVME (234 aa)) are Extracellular-facing. Cu cation-binding residues include H175, C210, C214, and H218. The Cytochrome c domain occupies 250–342 (TLANQGRQVF…AYLRSLKVME (93 aa)). Residues C264, C267, H268, and M317 each contribute to the heme c site.

It belongs to the cytochrome c oxidase subunit 2 family. It depends on Cu cation as a cofactor. Heme c is required as a cofactor.

It localises to the cell membrane. The catalysed reaction is 4 Fe(II)-[cytochrome c] + O2 + 8 H(+)(in) = 4 Fe(III)-[cytochrome c] + 2 H2O + 4 H(+)(out). Its function is as follows. Subunits I and II form the functional core of the enzyme complex. Electrons originating in cytochrome c are transferred via heme a and Cu(A) to the binuclear center formed by heme a3 and Cu(B). This is Cytochrome c oxidase subunit 2 (ctaC) from Alkalihalophilus pseudofirmus (strain ATCC BAA-2126 / JCM 17055 / OF4) (Bacillus pseudofirmus).